The chain runs to 292 residues: Short chain dehydrogenases/reductase notP' (292 aa).

Residues 1–25 (MPQTSDGNVHAPQYREAKPSQGDPS) are disordered. 7 residues coordinate NADP(+): leucine 48, aspartate 97, lysine 158, tyrosine 193, lysine 197, isoleucine 230, and threonine 232. Tyrosine 193 serves as the catalytic Proton donor. Catalysis depends on lysine 197, which acts as the Lowers pKa of active site Tyr.

It belongs to the short-chain dehydrogenases/reductases (SDR) family.

Functionally, short chain dehydrogenases/reductase; part of the gene cluster that mediates the biosynthesis of notoamide, a fungal indole alkaloid that belongs to a family of natural products containing a characteristic bicyclo[2.2.2]diazaoctane core. The first step of notoamide biosynthesis involves coupling of L-proline and L-tryptophan by the bimodular NRPS notE', to produce cyclo-L-tryptophan-L-proline called brevianamide F. The reverse prenyltransferase notF' then acts as a deoxybrevianamide E synthase and converts brevianamide F to deoxybrevianamide E via reverse prenylation at C-2 of the indole ring leading to the bicyclo[2.2.2]diazaoctane core. Deoxybrevianamide E is further hydroxylated at C-6 of the indole ring, likely catalyzed by the cytochrome P450 monooxygenase notG', to yield 6-hydroxy-deoxybrevianamide E. 6-hydroxy-deoxybrevianamide E is a specific substrate of the prenyltransferase notC' for normal prenylation at C-7 to produce 6-hydroxy-7-prenyl-deoxybrevianamide, also called notoamide S. As the proposed pivotal branching point in notoamide biosynthesis, notoamide S can be diverted to notoamide E through an oxidative pyran ring closure putatively catalyzed by either notH' cytochrome P450 monooxygenase or the notD' FAD-linked oxidoreductase. This step would be followed by an indole 2,3-epoxidation-initiated pinacol-like rearrangement catalyzed by the notB' FAD-dependent monooxygenase leading to the formation of notoamide C and notoamide D. On the other hand notoamide S is converted to notoamide T by notH' (or notD'), a bifunctional oxidase that also functions as the intramolecular Diels-Alderase responsible for generation of (-)-notoamide T. To generate antipodal (+)-notoaminide T, notH (or notD) in Aspergillus strain MF297-2 is expected to catalyze a Diels-Alder reaction leading to the opposite stereochemistry. The remaining oxidoreductase notD' (or notH') likely catalyzes the oxidative pyran ring formation to yield (-)-stephacidin A. The FAD-dependent monooxygenase notI' is highly similar to notB' and is predicted to catalyze a similar conversion from (-)-stephacidin A to (+)-notoamide B via the 2,3-epoxidation of (-)-stephacidin A followed by a pinacol-type rearrangement. Finally, it remains unclear which enzyme could be responsible for the final hydroxylation steps leading to notoamide A and sclerotiamide. The function of notP' in the notoamide biosynthesis has not been determined yet. This Aspergillus versicolor protein is Short chain dehydrogenases/reductase notP'.